The sequence spans 241 residues: MORN repeat-containing protein 3 (241 aa).

The tract at residues 6-35 is interaction with MDM2; that stretch reads CPQKSEPLWKEWDQKAQKNGLRHQVFAVNG. MORN repeat units follow at residues 38 to 60, 62 to 84, 91 to 113, 114 to 136, 137 to 159, 160 to 182, and 184 to 205; these read YVGE…KNGA, YEGD…DQET, YSGW…PKEY, YEGD…NGDI, YEGQ…NGNR, YEGN…DHGQ, and FEGF…GRDE. The interaction with SIRT1 stretch occupies residues 76–100; sequence TLSLPDQETGKYKRAYSGWWKGDKK. The interval 206–240 is interaction with TP53; sequence APQPTQFPIPEVKILDPDGVLEEALAMFKKTKEEG.

As to quaternary structure, interacts with MEIG1. Interacts with TP53, MDM2 and SIRT1; the interactions mediate post-transcriptional modifications of TP53 by MDM2 and SIRT1.

It is found in the cytoplasmic vesicle. The protein resides in the secretory vesicle. The protein localises to the acrosome. Functionally, assembles a suppression complex (suppresome) by tethering SIRT1 and MDM2 to regulate composite modifications of p53/TP53. Confers both deacetylation-mediated functional inactivation, by SIRT1, and ubiquitination-dependent degradation, by MDM2, of p53/TP53, promoting a proliferative and cell survival behaviors. May play a role in the regulation of spermatogenesis. The chain is MORN repeat-containing protein 3 (MORN3) from Bos taurus (Bovine).